The chain runs to 462 residues: MAKFRRRTCIILSLFIVFIFSLMMGLKMLWPNAASFGPPFGLDLLPELRPPNTHLENKADFQRSDRIDMETNTKDLKGAGVTVHPPRASEVNLEELPPLNYFVHAFYYSWYGNPQFDGKYVHWNHPVLEHWDPRIAKNYPQGRHSPPDDIGSSFYPELGSYSSRDPSVIETHMKQMRSASIGVLALSWYPPDASDENGEATDYLVPTILDKAHKYNLKVTFHIEPYSNRDDQNMHQNVKYIIDKYGNHPAFYRYKTRMGHSLPMFYIYDSYITKPKTWANLLTPSGSQSVRGSPYDGLFIALLVEEKHKYDILQSGFDGIYTYFATNGFTYGSSHQNWNKLKSFCEKNNMIFIPSVGPGYIDTSIRPWNTQNTRNRINGKYYEVGLSAALQTQPSLISITSFNEWHEGTQIEKAVPKRTANTVYLDYRPHKPSLYLEITRKWSEKYSKERMTYALDQQLPAS.

The Cytoplasmic portion of the chain corresponds to methionine 1 to cysteine 9. A helical; Signal-anchor for type II membrane protein transmembrane segment spans residues isoleucine 10–tryptophan 30. The Lumenal segment spans residues proline 31 to serine 462. Residues aspartate 60–serine 462 are catalytic.

The protein belongs to the glycosyl hydrolase 99 family. Undergoes proteolytic cleavage in the C-terminal region. Highly expressed in the liver and kidney.

It localises to the golgi apparatus membrane. It carries out the reaction N-{alpha-Glc-(1-&gt;3)-alpha-Man-(1-&gt;2)-alpha-Man-(1-&gt;2)-alpha-Man-(1-&gt;3)-[alpha-Man-(1-&gt;2)-alpha-Man-(1-&gt;3)-[alpha-Man-(1-&gt;2)-alpha-Man-(1-&gt;6)]-alpha-Man-(1-&gt;6)]-beta-Man-(1-&gt;4)-beta-GlcNAc-(1-&gt;4)-beta-GlcNAc}-L-asparaginyl-[protein] + H2O = alpha-D-glucosyl-(1-&gt;3)-D-mannopyranose + N(4)-{alpha-D-Man-(1-&gt;2)-alpha-D-Man-(1-&gt;3)-[alpha-D-Man-(1-&gt;2)-alpha-D-Man-(1-&gt;3)-[alpha-D-Man-(1-&gt;2)-alpha-D-Man-(1-&gt;6)]-alpha-D-Man-(1-&gt;6)]-beta-D-Man-(1-&gt;4)-beta-D-GlaNAc-(1-&gt;4)-beta-D-GlcNAc}-L-asparaginyl-[protein] (N-glucan mannose isomer 8A1,2,3B1,2). This chain is Glycoprotein endo-alpha-1,2-mannosidase (Manea), found in Rattus norvegicus (Rat).